Reading from the N-terminus, the 883-residue chain is Phosphoenolpyruvate carboxylase (883 aa).

Active-site residues include His-138 and Lys-546.

The protein belongs to the PEPCase type 1 family. Mg(2+) serves as cofactor.

The catalysed reaction is oxaloacetate + phosphate = phosphoenolpyruvate + hydrogencarbonate. Forms oxaloacetate, a four-carbon dicarboxylic acid source for the tricarboxylic acid cycle. This is Phosphoenolpyruvate carboxylase from Salmonella gallinarum (strain 287/91 / NCTC 13346).